A 314-amino-acid chain; its full sequence is 3'-5' exoribonuclease YhaM (314 aa).

Residues 22–90 (SSTKGIASNG…QLKLRNIRPV (69 aa)) constitute a DNA-binding region (OB). The HD domain occupies 163-279 (HVVSMLNLAK…LHYIDNLDAK (117 aa)).

It belongs to the YhaM family. It depends on Mn(2+) as a cofactor. Co(2+) serves as cofactor.

In terms of biological role, shows a 3'-5' exoribonuclease activity as well as single-stranded DNA 3'-5'exonuclease activity. Plays a role in the secondary pathway of 23S rRNA 3' end maturation. The protein is 3'-5' exoribonuclease YhaM of Bacillus subtilis (strain 168).